A 304-amino-acid polypeptide reads, in one-letter code: 4-diphosphocytidyl-2-C-methyl-D-erythritol kinase (304 aa).

Residue Lys-23 is part of the active site. Pro-111–Ser-121 is a binding site for ATP. Asp-153 is an active-site residue.

This sequence belongs to the GHMP kinase family. IspE subfamily. Homodimer.

It catalyses the reaction 4-CDP-2-C-methyl-D-erythritol + ATP = 4-CDP-2-C-methyl-D-erythritol 2-phosphate + ADP + H(+). It functions in the pathway isoprenoid biosynthesis; isopentenyl diphosphate biosynthesis via DXP pathway; isopentenyl diphosphate from 1-deoxy-D-xylulose 5-phosphate: step 3/6. In terms of biological role, catalyzes the phosphorylation of the position 2 hydroxy group of 4-diphosphocytidyl-2C-methyl-D-erythritol. This chain is 4-diphosphocytidyl-2-C-methyl-D-erythritol kinase, found in Wigglesworthia glossinidia brevipalpis.